Reading from the N-terminus, the 207-residue chain is MSYSGERDNFAPHMALVPMVIEQTSRGERSFDIYSRLLKERVIFLTGQVEDHMANLIVAQMLFLEAENPEKDIYLYINSPGGVITAGMSIYDTMQFIKPDVSTICMGQAASMGAFLLTAGAKGKRFCLPNSRVMIHQPLGGYQGQATDIEIHAREILKVKGRMNELMALHTGQSLEQIERDTERDRFLSAPEAVEYGLVDSILTHRN.

The Nucleophile role is filled by serine 111. Histidine 136 is an active-site residue.

This sequence belongs to the peptidase S14 family. Fourteen ClpP subunits assemble into 2 heptameric rings which stack back to back to give a disk-like structure with a central cavity, resembling the structure of eukaryotic proteasomes. Component of the ClpAP and ClpXP complexes.

Its subcellular location is the cytoplasm. The catalysed reaction is Hydrolysis of proteins to small peptides in the presence of ATP and magnesium. alpha-casein is the usual test substrate. In the absence of ATP, only oligopeptides shorter than five residues are hydrolyzed (such as succinyl-Leu-Tyr-|-NHMec, and Leu-Tyr-Leu-|-Tyr-Trp, in which cleavage of the -Tyr-|-Leu- and -Tyr-|-Trp bonds also occurs).. Its function is as follows. Cleaves peptides in various proteins in a process that requires ATP hydrolysis. Has a chymotrypsin-like activity. Plays a major role in the degradation of misfolded proteins. The polypeptide is ATP-dependent Clp protease proteolytic subunit (Escherichia coli O139:H28 (strain E24377A / ETEC)).